The following is a 619-amino-acid chain: Chaperone protein HscA homolog (619 aa).

This sequence belongs to the heat shock protein 70 family.

In terms of biological role, chaperone involved in the maturation of iron-sulfur cluster-containing proteins. Has a low intrinsic ATPase activity which is markedly stimulated by HscB. This Azotobacter vinelandii protein is Chaperone protein HscA homolog.